The chain runs to 272 residues: HMP-PP phosphatase (272 aa).

D8 acts as the Nucleophile in catalysis. D8, D10, and D212 together coordinate Mg(2+).

Belongs to the HAD-like hydrolase superfamily. Cof family. It depends on Mg(2+) as a cofactor.

It carries out the reaction 4-amino-2-methyl-5-(diphosphooxymethyl)pyrimidine + H2O = 4-amino-2-methyl-5-(phosphooxymethyl)pyrimidine + phosphate + H(+). Functionally, catalyzes the hydrolysis of 4-amino-2-methyl-5-hydroxymethylpyrimidine pyrophosphate (HMP-PP) to 4-amino-2-methyl-5-hydroxymethylpyrimidine phosphate (HMP-P). The sequence is that of HMP-PP phosphatase from Salmonella newport (strain SL254).